Here is a 57-residue protein sequence, read N- to C-terminus: Protein translocase subunit SecE (57 aa).

Residues 33-53 traverse the membrane as a helical segment; it reads GLGILLVGFIGFVIFSIMTFV.

Belongs to the SecE/SEC61-gamma family. As to quaternary structure, component of the Sec protein translocase complex. Heterotrimer consisting of SecY (alpha), SecG (beta) and SecE (gamma) subunits. The heterotrimers can form oligomers, although 1 heterotrimer is thought to be able to translocate proteins. Interacts with the ribosome. May interact with SecDF, and other proteins may be involved.

The protein resides in the cell membrane. Functionally, essential subunit of the Sec protein translocation channel SecYEG. Clamps together the 2 halves of SecY. May contact the channel plug during translocation. The chain is Protein translocase subunit SecE from Natronomonas pharaonis (strain ATCC 35678 / DSM 2160 / CIP 103997 / JCM 8858 / NBRC 14720 / NCIMB 2260 / Gabara) (Halobacterium pharaonis).